A 168-amino-acid chain; its full sequence is Large ribosomal subunit protein bL9 (168 aa).

The segment at 149 to 168 is disordered; it reads QSFEEEPAPEAPAEEAEAAE. Acidic residues predominate over residues 152–168; the sequence is EEEPAPEAPAEEAEAAE.

This sequence belongs to the bacterial ribosomal protein bL9 family.

In terms of biological role, binds to the 23S rRNA. The polypeptide is Large ribosomal subunit protein bL9 (Desulfovibrio desulfuricans (strain ATCC 27774 / DSM 6949 / MB)).